The chain runs to 250 residues: 5'-nucleotidase SurE (250 aa).

D8, D9, S39, and N95 together coordinate a divalent metal cation.

Belongs to the SurE nucleotidase family. Requires a divalent metal cation as cofactor.

The protein localises to the cytoplasm. The enzyme catalyses a ribonucleoside 5'-phosphate + H2O = a ribonucleoside + phosphate. Functionally, nucleotidase that shows phosphatase activity on nucleoside 5'-monophosphates. The sequence is that of 5'-nucleotidase SurE from Cupriavidus taiwanensis (strain DSM 17343 / BCRC 17206 / CCUG 44338 / CIP 107171 / LMG 19424 / R1) (Ralstonia taiwanensis (strain LMG 19424)).